Here is a 1436-residue protein sequence, read N- to C-terminus: Gag-Pol polyprotein (1436 aa).

Gly-2 carries the N-myristoyl glycine; by host lipid modification. Positions 7–31 (VLSGGKLDKWEKIRLRPRGKKRYKL) are interaction with Gp41. The interval 8–43 (LSGGKLDKWEKIRLRPRGKKRYKLKHIVWASRELER) is interaction with host CALM1. An interaction with host AP3D1 region spans residues 12–19 (KLDKWEKI). The segment at 14-33 (DKWEKIRLRPRGKKRYKLKH) is interaction with membrane phosphatidylinositol 4,5-bisphosphate and RNA. Residues 16–22 (WEKIRLR) carry the Nuclear export signal motif. The Nuclear localization signal signature appears at 26 to 32 (KKRYKLK). The interaction with membrane phosphatidylinositol 4,5-bisphosphate stretch occupies residues 73-77 (EELKS). Positions 106 to 128 (EEQNKSKKKAQQAAADTGNGSQV) are disordered. Phosphotyrosine; by host is present on Tyr-132. An interaction with human PPIA/CYPA and NUP153 region spans residues 189 to 227 (NTVGGHQAAMQMLKETINEEAAEWDRLHPVHAGPIAPGQ). Positions 277–363 (YSPISILDIR…GGPSHKARIL (87 aa)) are dimerization/Multimerization of capsid protein p24. 2 consecutive CCHC-type zinc fingers follow at residues 390-407 (VKCF…NCRA) and 411-428 (KGCW…DCTN). Positions 446-465 (KARELSSEQTRANSPTRREL) are disordered. A dimerization of protease region spans residues 490–494 (PQITL). The Peptidase A2 domain occupies 509–578 (KEALLDTGAD…TPVNIIGRNL (70 aa)). The active-site For protease activity; shared with dimeric partner is Asp-514. 2 dimerization of protease regions span residues 538-544 (GIGGFIK) and 577-589 (NLLT…LNFP). The Reverse transcriptase domain occupies 632–822 (EGKISKIGPE…PPFLWMGYEL (191 aa)). Residues Asp-698, Asp-773, and Asp-774 each coordinate Mg(2+). Residues 815 to 823 (FLWMGYELH) are RT 'primer grip'. The short motif at 986 to 1002 (WEAWWTEYWQATWIPEW) is the Tryptophan repeat motif element. The RNase H type-1 domain occupies 1022–1145 (IIGAETFYVD…VDRLVSTGIR (124 aa)). The Mg(2+) site is built by Asp-1031, Glu-1066, Asp-1086, and Asp-1137. An Integrase-type zinc finger spans residues 1151–1192 (DGIDKAQDEHEKYHSNWRAMASDFNLPPVVAKEIVASCDKCQ). Residues His-1160, His-1164, Cys-1188, and Cys-1191 each coordinate Zn(2+). The Integrase catalytic domain maps to 1202–1352 (VDCSPGIWQL…SAGERIVDII (151 aa)). Residues Asp-1212, Asp-1264, and Glu-1300 each contribute to the Mg(2+) site. The segment at residues 1371–1418 (FRVYYRDSRDPLWKGHAKLLWKGEGAVVIQDNSDIKVVPRRKAKIIRD) is a DNA-binding region (integrase-type).

As to quaternary structure, homotrimer; further assembles as hexamers of trimers. Interacts with gp41 (via C-terminus). Interacts with host CALM1; this interaction induces a conformational change in the Matrix protein, triggering exposure of the myristate group. Interacts with host AP3D1; this interaction allows the polyprotein trafficking to multivesicular bodies during virus assembly. Part of the pre-integration complex (PIC) which is composed of viral genome, matrix protein, Vpr and integrase. In terms of assembly, homodimer; the homodimer further multimerizes as homohexamers or homopentamers. Interacts with human PPIA/CYPA; This interaction stabilizes the capsid. Interacts with human NUP153. Interacts with host PDZD8; this interaction stabilizes the capsid. Interacts with monkey TRIM5; this interaction destabilizes the capsid. Homodimer, whose active site consists of two apposed aspartic acid residues. As to quaternary structure, heterodimer of p66 RT and p51 RT (RT p66/p51). Heterodimerization of RT is essential for DNA polymerase activity. The overall folding of the subdomains is similar in p66 RT and p51 RT but the spatial arrangements of the subdomains are dramatically different. In terms of assembly, homotetramer; may further associate as a homohexadecamer. Part of the pre-integration complex (PIC) which is composed of viral genome, matrix protein, Vpr and integrase. Interacts with human SMARCB1/INI1 and human PSIP1/LEDGF isoform 1. Interacts with human KPNA3; this interaction might play a role in nuclear import of the pre-integration complex. Interacts with human NUP153; this interaction might play a role in nuclear import of the pre-integration complex. Requires Mg(2+) as cofactor. Specific enzymatic cleavages by the viral protease yield mature proteins. The protease is released by autocatalytic cleavage. The polyprotein is cleaved during and after budding, this process is termed maturation. Proteolytic cleavage of p66 RT removes the RNase H domain to yield the p51 RT subunit. Nucleocapsid protein p7 might be further cleaved after virus entry. Post-translationally, tyrosine phosphorylated presumably in the virion by a host kinase. Phosphorylation is apparently not a major regulator of membrane association. In terms of processing, phosphorylated possibly by host MAPK1; this phosphorylation is necessary for Pin1-mediated virion uncoating. Methylated by host PRMT6, impairing its function by reducing RNA annealing and the initiation of reverse transcription.

Its subcellular location is the host cell membrane. The protein localises to the host endosome. It localises to the host multivesicular body. The protein resides in the virion membrane. It is found in the host nucleus. Its subcellular location is the host cytoplasm. The protein localises to the virion. The catalysed reaction is Specific for a P1 residue that is hydrophobic, and P1' variable, but often Pro.. The enzyme catalyses Endohydrolysis of RNA in RNA/DNA hybrids. Three different cleavage modes: 1. sequence-specific internal cleavage of RNA. Human immunodeficiency virus type 1 and Moloney murine leukemia virus enzymes prefer to cleave the RNA strand one nucleotide away from the RNA-DNA junction. 2. RNA 5'-end directed cleavage 13-19 nucleotides from the RNA end. 3. DNA 3'-end directed cleavage 15-20 nucleotides away from the primer terminus.. It carries out the reaction 3'-end directed exonucleolytic cleavage of viral RNA-DNA hybrid.. It catalyses the reaction DNA(n) + a 2'-deoxyribonucleoside 5'-triphosphate = DNA(n+1) + diphosphate. With respect to regulation, protease: The viral protease is inhibited by many synthetic protease inhibitors (PIs), such as amprenavir, atazanavir, indinavir, loprinavir, nelfinavir, ritonavir and saquinavir. Use of protease inhibitors in tritherapy regimens permit more ambitious therapeutic strategies. Reverse transcriptase/ribonuclease H: RT can be inhibited either by nucleoside RT inhibitors (NRTIs) or by non nucleoside RT inhibitors (NNRTIs). NRTIs act as chain terminators, whereas NNRTIs inhibit DNA polymerization by binding a small hydrophobic pocket near the RT active site and inducing an allosteric change in this region. Classical NRTIs are abacavir, adefovir (PMEA), didanosine (ddI), lamivudine (3TC), stavudine (d4T), tenofovir (PMPA), zalcitabine (ddC), and zidovudine (AZT). Classical NNRTIs are atevirdine (BHAP U-87201E), delavirdine, efavirenz (DMP-266), emivirine (I-EBU), and nevirapine (BI-RG-587). The tritherapies used as a basic effective treatment of AIDS associate two NRTIs and one NNRTI. Its function is as follows. Mediates, with Gag polyprotein, the essential events in virion assembly, including binding the plasma membrane, making the protein-protein interactions necessary to create spherical particles, recruiting the viral Env proteins, and packaging the genomic RNA via direct interactions with the RNA packaging sequence (Psi). Gag-Pol polyprotein may regulate its own translation, by the binding genomic RNA in the 5'-UTR. At low concentration, the polyprotein would promote translation, whereas at high concentration, the polyprotein would encapsidate genomic RNA and then shut off translation. Functionally, targets the polyprotein to the plasma membrane via a multipartite membrane-binding signal, that includes its myristoylated N-terminus. Matrix protein is part of the pre-integration complex. Implicated in the release from host cell mediated by Vpu. Binds to RNA. In terms of biological role, forms the conical core that encapsulates the genomic RNA-nucleocapsid complex in the virion. Most core are conical, with only 7% tubular. The core is constituted by capsid protein hexamer subunits. The core is disassembled soon after virion entry. Host restriction factors such as TRIM5-alpha or TRIMCyp bind retroviral capsids and cause premature capsid disassembly, leading to blocks in reverse transcription. Capsid restriction by TRIM5 is one of the factors which restricts HIV-1 to the human species. Host PIN1 apparently facilitates the virion uncoating. On the other hand, interactions with PDZD8 or CYPA stabilize the capsid. Encapsulates and protects viral dimeric unspliced genomic RNA (gRNA). Binds these RNAs through its zinc fingers. Acts as a nucleic acid chaperone which is involved in rearangement of nucleic acid secondary structure during gRNA retrotranscription. Also facilitates template switch leading to recombination. As part of the polyprotein, participates in gRNA dimerization, packaging, tRNA incorporation and virion assembly. Its function is as follows. Aspartyl protease that mediates proteolytic cleavages of Gag and Gag-Pol polyproteins during or shortly after the release of the virion from the plasma membrane. Cleavages take place as an ordered, step-wise cascade to yield mature proteins. This process is called maturation. Displays maximal activity during the budding process just prior to particle release from the cell. Also cleaves Nef and Vif, probably concomitantly with viral structural proteins on maturation of virus particles. Hydrolyzes host EIF4GI and PABP1 in order to shut off the capped cellular mRNA translation. The resulting inhibition of cellular protein synthesis serves to ensure maximal viral gene expression and to evade host immune response. Also mediates cleavage of host YTHDF3. Mediates cleavage of host CARD8, thereby activating the CARD8 inflammasome, leading to the clearance of latent HIV-1 in patient CD4(+) T-cells after viral reactivation; in contrast, HIV-1 can evade CARD8-sensing when its protease remains inactive in infected cells prior to viral budding. Functionally, multifunctional enzyme that converts the viral RNA genome into dsDNA in the cytoplasm, shortly after virus entry into the cell. This enzyme displays a DNA polymerase activity that can copy either DNA or RNA templates, and a ribonuclease H (RNase H) activity that cleaves the RNA strand of RNA-DNA heteroduplexes in a partially processive 3' to 5' endonucleasic mode. Conversion of viral genomic RNA into dsDNA requires many steps. A tRNA(3)-Lys binds to the primer-binding site (PBS) situated at the 5'-end of the viral RNA. RT uses the 3' end of the tRNA primer to perform a short round of RNA-dependent minus-strand DNA synthesis. The reading proceeds through the U5 region and ends after the repeated (R) region which is present at both ends of viral RNA. The portion of the RNA-DNA heteroduplex is digested by the RNase H, resulting in a ssDNA product attached to the tRNA primer. This ssDNA/tRNA hybridizes with the identical R region situated at the 3' end of viral RNA. This template exchange, known as minus-strand DNA strong stop transfer, can be either intra- or intermolecular. RT uses the 3' end of this newly synthesized short ssDNA to perform the RNA-dependent minus-strand DNA synthesis of the whole template. RNase H digests the RNA template except for two polypurine tracts (PPTs) situated at the 5'-end and near the center of the genome. It is not clear if both polymerase and RNase H activities are simultaneous. RNase H probably can proceed both in a polymerase-dependent (RNA cut into small fragments by the same RT performing DNA synthesis) and a polymerase-independent mode (cleavage of remaining RNA fragments by free RTs). Secondly, RT performs DNA-directed plus-strand DNA synthesis using the PPTs that have not been removed by RNase H as primers. PPTs and tRNA primers are then removed by RNase H. The 3' and 5' ssDNA PBS regions hybridize to form a circular dsDNA intermediate. Strand displacement synthesis by RT to the PBS and PPT ends produces a blunt ended, linear dsDNA copy of the viral genome that includes long terminal repeats (LTRs) at both ends. In terms of biological role, catalyzes viral DNA integration into the host chromosome, by performing a series of DNA cutting and joining reactions. This enzyme activity takes place after virion entry into a cell and reverse transcription of the RNA genome in dsDNA. The first step in the integration process is 3' processing. This step requires a complex comprising the viral genome, matrix protein, Vpr and integrase. This complex is called the pre-integration complex (PIC). The integrase protein removes 2 nucleotides from each 3' end of the viral DNA, leaving recessed CA OH's at the 3' ends. In the second step, the PIC enters cell nucleus. This process is mediated through integrase and Vpr proteins, and allows the virus to infect a non dividing cell. This ability to enter the nucleus is specific of lentiviruses, other retroviruses cannot and rely on cell division to access cell chromosomes. In the third step, termed strand transfer, the integrase protein joins the previously processed 3' ends to the 5' ends of strands of target cellular DNA at the site of integration. The 5'-ends are produced by integrase-catalyzed staggered cuts, 5 bp apart. A Y-shaped, gapped, recombination intermediate results, with the 5'-ends of the viral DNA strands and the 3' ends of target DNA strands remaining unjoined, flanking a gap of 5 bp. The last step is viral DNA integration into host chromosome. This involves host DNA repair synthesis in which the 5 bp gaps between the unjoined strands are filled in and then ligated. Since this process occurs at both cuts flanking the HIV genome, a 5 bp duplication of host DNA is produced at the ends of HIV-1 integration. Alternatively, Integrase may catalyze the excision of viral DNA just after strand transfer, this is termed disintegration. The polypeptide is Gag-Pol polyprotein (gag-pol) (Human immunodeficiency virus type 1 group M subtype B (isolate RF/HAT3) (HIV-1)).